Consider the following 1030-residue polypeptide: Semaphorin-6A (1030 aa).

The N-terminal stretch at 1 to 18 (MRSEALLLYFTLLHFAGA) is a signal peptide. At 19–649 (GFPEDSEPIS…KGHDQLVPVT (631 aa)) the chain is on the extracellular side. Residues 24 to 512 (SEPISISHGN…FSTCVIKVPL (489 aa)) form the Sema domain. N-linked (GlcNAc...) asparagine glycans are attached at residues Asn33, Asn49, and Asn65. 4 disulfide bridges follow: Cys107/Cys117, Cys135/Cys144, Cys258/Cys369, and Cys283/Cys328. Residue Asn282 is glycosylated (N-linked (GlcNAc...) asparagine). Asn434 and Asn461 each carry an N-linked (GlcNAc...) asparagine glycan. 4 disulfide bridges follow: Cys477–Cys506, Cys515–Cys533, Cys521–Cys568, and Cys525–Cys542. The chain crosses the membrane as a helical span at residues 650–670 (LLAIAVILAFVMGAVFSGITV). At 671–1030 (YCVCDHRRKD…TSMKPNDACT (360 aa)) the chain is on the cytoplasmic side. At Ser698 the chain carries Phosphoserine. Disordered stretches follow at residues 754 to 778 (ALPT…REWE), 860 to 897 (SSKS…SLSQ), and 912 to 1030 (YGVD…DACT). The segment covering 920-936 (YPTNSLTRSHQATTLKR) has biased composition (polar residues). Residues 937–952 (NNTNSSNSSHLSRNQS) are compositionally biased toward low complexity. Phosphoserine is present on Ser952. Polar residues-rich tracts occupy residues 970–997 (QVHS…SLTR) and 1018–1030 (PLST…DACT).

This sequence belongs to the semaphorin family. As to quaternary structure, active as a homodimer or oligomer. The SEMA6A homodimer interacts with a PLXNA2 homodimer, giving rise to a heterotetramer. Interacts with EVL. In terms of assembly, (Microbial infection) Interacts with P.sordellii toxin TcsL; semaphorins SEMA6A and SEMA6B constitute the major host receptors for TcsL in the vascular endothelium.

Its subcellular location is the cell membrane. In terms of biological role, cell surface receptor for PLXNA2 that plays an important role in cell-cell signaling. Required for normal granule cell migration in the developing cerebellum. Promotes reorganization of the actin cytoskeleton and plays an important role in axon guidance in the developing central nervous system. Can act as repulsive axon guidance cue. Has repulsive action towards migrating granular neurons. May play a role in channeling sympathetic axons into the sympathetic chains and controlling the temporal sequence of sympathetic target innervation. Functionally, (Microbial infection) Acts as a receptor for P.sordellii toxin TcsL in the in the vascular endothelium. The chain is Semaphorin-6A (SEMA6A) from Homo sapiens (Human).